The chain runs to 179 residues: Large ribosomal subunit protein uL6 (179 aa).

It belongs to the universal ribosomal protein uL6 family. Part of the 50S ribosomal subunit.

Its function is as follows. This protein binds to the 23S rRNA, and is important in its secondary structure. It is located near the subunit interface in the base of the L7/L12 stalk, and near the tRNA binding site of the peptidyltransferase center. This is Large ribosomal subunit protein uL6 from Prochlorococcus marinus (strain SARG / CCMP1375 / SS120).